The following is a 599-amino-acid chain: Sulfite reductase [NADPH] flavoprotein alpha-component (599 aa).

The 139-residue stretch at 64-202 (ITIISASQTG…AASEWRARVV (139 aa)) folds into the Flavodoxin-like domain. FMN contacts are provided by residues 70–75 (SQTGNA), 117–120 (STQG), and 153–162 (LGDSSYEFFC). One can recognise an FAD-binding FR-type domain in the interval 234 to 448 (DAPLAASLSV…IEHNDNFRLP (215 aa)). FAD is bound by residues Thr322, Ala356, 386–389 (RLYS), 404–406 (TVG), Tyr410, and 419–422 (GGAS). NADP(+) contacts are provided by residues 519–520 (SR), 525–529 (KIYVQ), and Asp561. Tyr599 contacts FAD.

Belongs to the NADPH-dependent sulphite reductase flavoprotein subunit CysJ family. The protein in the N-terminal section; belongs to the flavodoxin family. It in the C-terminal section; belongs to the flavoprotein pyridine nucleotide cytochrome reductase family. In terms of assembly, alpha(8)-beta(8). The alpha component is a flavoprotein, the beta component is a hemoprotein. FAD is required as a cofactor. Requires FMN as cofactor.

The enzyme catalyses hydrogen sulfide + 3 NADP(+) + 3 H2O = sulfite + 3 NADPH + 4 H(+). It functions in the pathway sulfur metabolism; hydrogen sulfide biosynthesis; hydrogen sulfide from sulfite (NADPH route): step 1/1. Functionally, component of the sulfite reductase complex that catalyzes the 6-electron reduction of sulfite to sulfide. This is one of several activities required for the biosynthesis of L-cysteine from sulfate. The flavoprotein component catalyzes the electron flow from NADPH -&gt; FAD -&gt; FMN to the hemoprotein component. The chain is Sulfite reductase [NADPH] flavoprotein alpha-component from Escherichia coli O6:K15:H31 (strain 536 / UPEC).